Consider the following 429-residue polypeptide: D-amino acid dehydrogenase (429 aa).

3–17 contacts FAD; the sequence is VLILGSGVIGVTSAW.

The protein belongs to the DadA oxidoreductase family. It depends on FAD as a cofactor.

It carries out the reaction a D-alpha-amino acid + A + H2O = a 2-oxocarboxylate + AH2 + NH4(+). In terms of biological role, oxidative deamination of D-amino acids. This Xanthomonas axonopodis pv. citri (strain 306) protein is D-amino acid dehydrogenase.